Reading from the N-terminus, the 436-residue chain is 3-ketoacyl-CoA thiolase (436 aa).

Cysteine 99 functions as the Acyl-thioester intermediate in the catalytic mechanism. Catalysis depends on proton acceptor residues histidine 392 and cysteine 422.

This sequence belongs to the thiolase-like superfamily. Thiolase family. In terms of assembly, heterotetramer of two alpha chains (FadJ) and two beta chains (FadI).

The protein resides in the cytoplasm. It carries out the reaction an acyl-CoA + acetyl-CoA = a 3-oxoacyl-CoA + CoA. It functions in the pathway lipid metabolism; fatty acid beta-oxidation. Catalyzes the final step of fatty acid oxidation in which acetyl-CoA is released and the CoA ester of a fatty acid two carbons shorter is formed. This Escherichia coli (strain 55989 / EAEC) protein is 3-ketoacyl-CoA thiolase.